The chain runs to 78 residues: Large ribosomal subunit protein bL28 (78 aa).

A disordered region spans residues 1–20; that stretch reads MSRVCQVTSKRPAVGNNRSH.

It belongs to the bacterial ribosomal protein bL28 family.

In Haemophilus ducreyi (strain 35000HP / ATCC 700724), this protein is Large ribosomal subunit protein bL28.